The following is a 208-amino-acid chain: Protein-L-isoaspartate O-methyltransferase (208 aa).

Ser59 is an active-site residue.

The protein belongs to the methyltransferase superfamily. L-isoaspartyl/D-aspartyl protein methyltransferase family.

Its subcellular location is the cytoplasm. It carries out the reaction [protein]-L-isoaspartate + S-adenosyl-L-methionine = [protein]-L-isoaspartate alpha-methyl ester + S-adenosyl-L-homocysteine. Its function is as follows. Catalyzes the methyl esterification of L-isoaspartyl residues in peptides and proteins that result from spontaneous decomposition of normal L-aspartyl and L-asparaginyl residues. It plays a role in the repair and/or degradation of damaged proteins. In Pectobacterium carotovorum subsp. carotovorum (strain PC1), this protein is Protein-L-isoaspartate O-methyltransferase.